A 143-amino-acid chain; its full sequence is Deoxyuridine 5'-triphosphate nucleotidohydrolase (143 aa).

Substrate-binding positions include R62 to G64, N75, T79 to D81, and K89.

The protein belongs to the dUTPase family. The cofactor is Mg(2+).

It catalyses the reaction dUTP + H2O = dUMP + diphosphate + H(+). Its pathway is pyrimidine metabolism; dUMP biosynthesis; dUMP from dCTP (dUTP route): step 2/2. This enzyme is involved in nucleotide metabolism: it produces dUMP, the immediate precursor of thymidine nucleotides and it decreases the intracellular concentration of dUTP so that uracil cannot be incorporated into DNA. The chain is Deoxyuridine 5'-triphosphate nucleotidohydrolase from Clostridium kluyveri (strain ATCC 8527 / DSM 555 / NBRC 12016 / NCIMB 10680 / K1).